The sequence spans 74 residues: Protein SlyX homolog (74 aa).

The interval 52–74 (LKQMQENQSTDSDPADEPPPPHY) is disordered.

The protein belongs to the SlyX family.

The sequence is that of Protein SlyX homolog from Idiomarina loihiensis (strain ATCC BAA-735 / DSM 15497 / L2-TR).